We begin with the raw amino-acid sequence, 532 residues long: Vesicular acetylcholine transporter (532 aa).

The Cytoplasmic portion of the chain corresponds to 1-33 (MESAEPAGQARAAATKLSEAVGAALQEPRRQRR). The chain crosses the membrane as a helical span at residues 34–54 (LVLVIVCVALLLDNMLYMVIV). Over 55-125 (PIVPDYIAHM…PTESEDVKIG (71 aa)) the chain is Lumenal, vesicle. N89 and N96 each carry an N-linked (GlcNAc...) asparagine glycan. Residues 126-146 (VLFASKAILQLLVNPLSGPFI) traverse the membrane as a helical segment. Residues 147–152 (DRMSYD) are Cytoplasmic-facing. Residues 153–173 (VPLLIGLGVMFASTVLFAFAE) traverse the membrane as a helical segment. The Lumenal, vesicle segment spans residues 174-182 (DYATLFAAR). Residues 183–203 (SLQGLGSAFADTSGIAMIADK) traverse the membrane as a helical segment. The Cytoplasmic segment spans residues 204-213 (YPEEPERSRA). Residues 214-234 (LGVALAFISFGSLVAPPFGGI) traverse the membrane as a helical segment. The Lumenal, vesicle segment spans residues 235–242 (LYEFAGKR). A helical transmembrane segment spans residues 243 to 263 (VPFLVLAAVSLFDALLLLAVA). Residues 264 to 289 (KPFSAAARARANLPVGTPIHRLMLDP) lie on the Cytoplasmic side of the membrane. A helical transmembrane segment spans residues 290-310 (YIAVVAGALTTCNIPLAFLEP). The Lumenal, vesicle segment spans residues 311–325 (TIATWMKHTMAASEW). The chain crosses the membrane as a helical span at residues 326 to 346 (EMGMAWLPAFVPHVLGVYLTV). The Cytoplasmic portion of the chain corresponds to 347-356 (RLAARYPHLQ). A helical membrane pass occupies residues 357–377 (WLYGALGLAVIGASSCIVPAC). Topologically, residues 378–388 (RSFAPLVVSLC) are lumenal, vesicle. The helical transmembrane segment at 389–409 (GLCFGIALVDTALLPTLAFLV) threads the bilayer. Topologically, residues 410-422 (DVRHVSVYGSVYA) are cytoplasmic. A helical membrane pass occupies residues 423–443 (IADISYSVAYALGPIVAGHIV). At 444–447 (HSLG) the chain is on the lumenal, vesicle side. The helical transmembrane segment at 448–468 (FEQLSLGMGLANLLYAPVLLL) threads the bilayer. Residues 469-532 (LRNVGLLTRS…DDYNYYYTRS (64 aa)) lie on the Cytoplasmic side of the membrane. Positions 471–532 (NVGLLTRSRS…DDYNYYYTRS (62 aa)) are mediates interaction with SEC14L1. Residues 502-523 (RPVSGQDGEPRSPPGPFDACED) are disordered.

Belongs to the major facilitator superfamily. Vesicular transporter family. In terms of assembly, interacts with SEC14L1. Peripheral and central cholinergic nervous systems.

Its subcellular location is the cytoplasmic vesicle. The protein localises to the secretory vesicle. The protein resides in the synaptic vesicle membrane. It catalyses the reaction acetylcholine(out) + 2 H(+)(in) = acetylcholine(in) + 2 H(+)(out). The catalysed reaction is choline(in) + 2 H(+)(out) = choline(out) + 2 H(+)(in). The enzyme catalyses serotonin(in) + 2 H(+)(out) = serotonin(out) + 2 H(+)(in). Potently inhibited by L-vesamicol, reserpine and tetrabenazine. In terms of biological role, electrogenic antiporter that exchanges one cholinergic neurotransmitter, acetylcholine or choline, with two intravesicular protons across the membrane of synaptic vesicles. Uses the electrochemical proton gradient established by the V-type proton-pump ATPase to store neurotransmitters inside the vesicles prior to their release via exocytosis. Determines cholinergic vesicular quantal size at presynaptic nerve terminals in developing neuro-muscular junctions with an impact on motor neuron differentiation and innervation pattern. Part of forebrain cholinergic system, regulates hippocampal synapse transmissions that underlie spatial memory formation. Can transport serotonin. In Homo sapiens (Human), this protein is Vesicular acetylcholine transporter (SLC18A3).